Reading from the N-terminus, the 336-residue chain is SCP domain-containing protein 1 (336 aa).

The signal sequence occupies residues 1–18 (MEFKLLLVLCFNIGLICS). N-linked (GlcNAc...) asparagine glycosylation occurs at Asn-47. Positions 73 to 85 (QGGNTAPSSSLPG) are enriched in polar residues. A disordered region spans residues 73–94 (QGGNTAPSSSLPGVSSMPMPSA). One can recognise an SCP domain in the interval 175–292 (LEEHNKFRSD…YCGDMSFIAC (118 aa)). Asn-213 and Asn-257 each carry an N-linked (GlcNAc...) asparagine glycan.

As to expression, component of the acid-insoluble and acid-soluble organic matrix of calcified layers of the shell (at protein level).

It is found in the secreted. This is SCP domain-containing protein 1 from Lottia gigantea (Giant owl limpet).